The primary structure comprises 274 residues: Large ribosomal subunit protein uL2 (274 aa).

The disordered stretch occupies residues R221–K274.

This sequence belongs to the universal ribosomal protein uL2 family. Part of the 50S ribosomal subunit. Forms a bridge to the 30S subunit in the 70S ribosome.

One of the primary rRNA binding proteins. Required for association of the 30S and 50S subunits to form the 70S ribosome, for tRNA binding and peptide bond formation. It has been suggested to have peptidyltransferase activity; this is somewhat controversial. Makes several contacts with the 16S rRNA in the 70S ribosome. This Hamiltonella defensa subsp. Acyrthosiphon pisum (strain 5AT) protein is Large ribosomal subunit protein uL2.